Here is a 256-residue protein sequence, read N- to C-terminus: Acetyl-coenzyme A carboxylase carboxyl transferase subunit alpha (256 aa).

The CoA carboxyltransferase C-terminal domain occupies 1-236 (MSDVARILKE…KTAIVDELAE (236 aa)).

The protein belongs to the AccA family. Acetyl-CoA carboxylase is a heterohexamer composed of biotin carboxyl carrier protein (AccB), biotin carboxylase (AccC) and two subunits each of ACCase subunit alpha (AccA) and ACCase subunit beta (AccD).

The protein localises to the cytoplasm. The enzyme catalyses N(6)-carboxybiotinyl-L-lysyl-[protein] + acetyl-CoA = N(6)-biotinyl-L-lysyl-[protein] + malonyl-CoA. It functions in the pathway lipid metabolism; malonyl-CoA biosynthesis; malonyl-CoA from acetyl-CoA: step 1/1. Functionally, component of the acetyl coenzyme A carboxylase (ACC) complex. First, biotin carboxylase catalyzes the carboxylation of biotin on its carrier protein (BCCP) and then the CO(2) group is transferred by the carboxyltransferase to acetyl-CoA to form malonyl-CoA. The sequence is that of Acetyl-coenzyme A carboxylase carboxyl transferase subunit alpha from Streptococcus thermophilus (strain ATCC BAA-491 / LMD-9).